The sequence spans 209 residues: Putative cardiolipin synthase (209 aa).

The next 4 membrane-spanning stretches (helical) occupy residues alanine 27–phenylalanine 47, valine 82–leucine 102, valine 126–leucine 146, and leucine 157–valine 177.

This sequence belongs to the CDP-alcohol phosphatidyltransferase class-I family.

Its subcellular location is the cell membrane. The catalysed reaction is a CDP-1,2-diacyl-sn-glycerol + a 1,2-diacyl-sn-glycero-3-phospho-(1'-sn-glycerol) = a cardiolipin + CMP + H(+). It functions in the pathway lipid metabolism; phospholipid metabolism. In terms of biological role, may catalyze the biosynthesis of cardiolipin from phosphatidylglycerol (PG) and CDP-diacylglycerol. This is Putative cardiolipin synthase from Mycobacterium bovis (strain ATCC BAA-935 / AF2122/97).